Here is a 132-residue protein sequence, read N- to C-terminus: ATP synthase epsilon chain, chloroplastic (132 aa).

T2 is modified (N-acetylthreonine).

The protein belongs to the ATPase epsilon chain family. F-type ATPases have 2 components, CF(1) - the catalytic core - and CF(0) - the membrane proton channel. CF(1) has five subunits: alpha(3), beta(3), gamma(1), delta(1), epsilon(1). CF(0) has three main subunits: a, b and c.

The protein resides in the plastid. Its subcellular location is the chloroplast thylakoid membrane. Functionally, produces ATP from ADP in the presence of a proton gradient across the membrane. The protein is ATP synthase epsilon chain, chloroplastic of Arabidopsis thaliana (Mouse-ear cress).